Consider the following 210-residue polypeptide: UPF0301 protein M446_6268 (210 aa).

This sequence belongs to the UPF0301 (AlgH) family.

This Methylobacterium sp. (strain 4-46) protein is UPF0301 protein M446_6268.